Consider the following 368-residue polypeptide: Phosphoserine aminotransferase (368 aa).

Arginine 44 is an L-glutamate binding site. Pyridoxal 5'-phosphate is bound by residues 78–79 (AT), tryptophan 104, threonine 157, aspartate 179, and glutamine 202. Lysine 203 bears the N6-(pyridoxal phosphate)lysine mark. Position 244–245 (244–245 (NT)) interacts with pyridoxal 5'-phosphate.

The protein belongs to the class-V pyridoxal-phosphate-dependent aminotransferase family. SerC subfamily. In terms of assembly, homodimer. Requires pyridoxal 5'-phosphate as cofactor.

It localises to the cytoplasm. It carries out the reaction O-phospho-L-serine + 2-oxoglutarate = 3-phosphooxypyruvate + L-glutamate. The catalysed reaction is 4-(phosphooxy)-L-threonine + 2-oxoglutarate = (R)-3-hydroxy-2-oxo-4-phosphooxybutanoate + L-glutamate. The protein operates within amino-acid biosynthesis; L-serine biosynthesis; L-serine from 3-phospho-D-glycerate: step 2/3. It functions in the pathway cofactor biosynthesis; pyridoxine 5'-phosphate biosynthesis; pyridoxine 5'-phosphate from D-erythrose 4-phosphate: step 3/5. Its function is as follows. Catalyzes the reversible conversion of 3-phosphohydroxypyruvate to phosphoserine and of 3-hydroxy-2-oxo-4-phosphonooxybutanoate to phosphohydroxythreonine. The chain is Phosphoserine aminotransferase from Neisseria meningitidis serogroup C / serotype 2a (strain ATCC 700532 / DSM 15464 / FAM18).